Consider the following 819-residue polypeptide: Leucine--tRNA ligase (819 aa).

The 'HIGH' region signature appears at 42–52 (PYPSGRLHMGH). The short motif at 577–581 (KMSKS) is the 'KMSKS' region element. ATP is bound at residue lysine 580.

The protein belongs to the class-I aminoacyl-tRNA synthetase family.

It is found in the cytoplasm. The enzyme catalyses tRNA(Leu) + L-leucine + ATP = L-leucyl-tRNA(Leu) + AMP + diphosphate. The chain is Leucine--tRNA ligase from Saccharophagus degradans (strain 2-40 / ATCC 43961 / DSM 17024).